The following is a 3051-amino-acid chain: Biorientation of chromosomes in cell division protein 1-like 1 (3051 aa).

Over residues 1–33 (MATNPQPQPPPPAPPPPPPQPQPQPPPPPPGPG) the composition is skewed to pro residues. 5 disordered regions span residues 1 to 47 (MATN…AGAG), 164 to 197 (HKEEGSGNTAPDDEKPDTSLITQGVPTPGPSANV), 215 to 288 (ASAA…CPVE), 301 to 393 (ILLN…KEDF), and 411 to 469 (VHTS…VRHA). Gly residues predominate over residues 34–47 (AGPGAGGAGGAGAG). The segment covering 215–227 (ASAARASTETSNA) has biased composition (low complexity). The span at 246 to 263 (STDKERTSEDMADKEKST) shows a compositional bias: basic and acidic residues. Phosphoserine is present on Ser-266. Residues 312–393 (SEQKNKSTDK…KTVEGTKEDF (82 aa)) show a composition bias toward basic and acidic residues. The span at 418 to 443 (SFEEDTEEEVVTSDSMEEGEITSDDE) shows a compositional bias: acidic residues. An N6-acetyllysine modification is found at Lys-473. 2 positions are modified to phosphoserine: Ser-482 and Ser-484. 3 stretches are compositionally biased toward basic and acidic residues: residues 497-527 (IAKEKEERLLRRQINREKLEEKRKQKAEKTK), 549-570 (LEPKAARIKEVLKERKVLEKKV), and 580-653 (SRNV…LERE). Residues 497-1203 (IAKEKEERLL…EKHADHRSTL (707 aa)) form a disordered region. Ser-635 and Ser-659 each carry phosphoserine. Phosphothreonine occurs at positions 660 and 733. Composition is skewed to basic and acidic residues over residues 671-772 (TDTR…EENI), 804-852 (KDGK…KIQK), 866-878 (RRSESYSEDKCDM), 940-966 (KPDKEKNTEENDSEKQRKSKVEDKPFE), 984-1021 (TQKDSSHRAKLPLAKEKYKSDKDSTSTRLERKLSDGHK), and 1028-1075 (SSKD…ENRR). Phosphoserine is present on Ser-1077. Composition is skewed to polar residues over residues 1092 to 1103 (NTLSTPSGSSLQ) and 1135 to 1148 (SKTQDNRNNNSQQD). Phosphoserine is present on residues Ser-1145 and Ser-1318. At Thr-1354 the chain carries Phosphothreonine. Disordered regions lie at residues 1456–1550 (KLKH…QSEV), 1700–1725 (GSISSEEVDGSQGNMMRMGPKKETEG), and 1760–1890 (VVLG…TGLG). Positions 1465–1479 (KVKDISIDVERRNEN) are enriched in basic and acidic residues. Polar residues predominate over residues 1482-1504 (VDTSAGSGSAPSVLHQRNGQTED). Ser-1531, Ser-1701, and Ser-1710 each carry phosphoserine. 4 positions are modified to phosphoserine: Ser-2013, Ser-2025, Ser-2128, and Ser-2203. Disordered stretches follow at residues 2189–2210 (DFEGPMPSAPPEAESPLASTSK), 2258–2285 (TSSVEDCEGPVSSAVPQEEGDPSVTPAE), 2403–2447 (STEE…FAGR), 2472–2519 (EDKS…AKDP), 2615–2635 (DQASAEKTGDDNSTRKSFPEE), and 2717–3051 (VENS…KAKR). Residues 2191 to 2207 (EGPMPSAPPEAESPLAS) are compositionally biased toward low complexity. Positions 2428–2439 (AEKEEKHGKECP) are enriched in basic and acidic residues. The residue at position 2475 (Ser-2475) is a Phosphoserine. Positions 2483–2492 (GSSTASYSAG) are enriched in low complexity. Ser-2501 and Ser-2618 each carry phosphoserine. Composition is skewed to basic and acidic residues over residues 2621–2633 (KTGDDNSTRKSFP), 2724–2746 (TNEEIHSESYNKGEISSGRKDNA), and 2754–2767 (VEADPKEVEEEERH). A compositionally biased stretch (acidic residues) spans 2780-2789 (SEDEPDDNPD). The span at 2791 to 2822 (LDSRIETAQRQCPETEPHDTKEENSRDLEELP) shows a compositional bias: basic and acidic residues. A compositionally biased stretch (polar residues) spans 2823–2834 (KTSSETNSTTSR). Over residues 2848 to 2864 (TGEKPEQNDDDTIKSQE) the composition is skewed to basic and acidic residues. Basic residues predominate over residues 2871 to 2880 (IKRKRGRPRK). The segment at residues 2872–2884 (KRKRGRPRKYPVE) is a DNA-binding region (a.T hook). The span at 2896–2910 (DTGIVTVEQSPSSSK) shows a compositional bias: polar residues. Phosphoserine occurs at positions 2905 and 2907. The span at 2944 to 2953 (VRRRGRKPKR) shows a compositional bias: basic residues. Ser-2954 is modified (phosphoserine). Phosphothreonine is present on Thr-2956. 3 positions are modified to phosphoserine: Ser-2958, Ser-2964, and Ser-2973. Glycyl lysine isopeptide (Lys-Gly) (interchain with G-Cter in ubiquitin) cross-links involve residues Lys-2981 and Lys-2982. The span at 2985–2998 (ESDEEEEEEEEDEP) shows a compositional bias: acidic residues. Phosphoserine is present on residues Ser-2986 and Ser-3019. The span at 3000–3020 (GATTRSTTRSEAQRSKTQLSP) shows a compositional bias: polar residues. The span at 3039 to 3051 (QRVEEAPVKKAKR) shows a compositional bias: basic and acidic residues.

This sequence belongs to the BOD1 family. In terms of assembly, interacts (via COMPASS-Shg1 domain) with SETD1A at stalled replication forks; this interaction mediates FANCD2-dependent nucleosome remodeling at reversed forks protecting them from nucleolytic degradation.

It is found in the chromosome. Component of the fork protection machinery required to protect stalled/damaged replication forks from uncontrolled DNA2-dependent resection. Acts by stabilizing RAD51 at stalled replication forks and protecting RAD51 nucleofilaments from the antirecombinogenic activities of FBH1 and BLM. Does not regulate spindle orientation. The chain is Biorientation of chromosomes in cell division protein 1-like 1 from Homo sapiens (Human).